Reading from the N-terminus, the 352-residue chain is Mitochondrial ubiquitin ligase activator of NFKB 1 (352 aa).

At 1–8 the chain is on the cytoplasmic side; the sequence is MENGGRPS. A helical transmembrane segment spans residues 9–29; that stretch reads LCQFILLGTTSVVTAALYSVY. Over 30–238 the chain is Mitochondrial intermembrane; that stretch reads RQKAWVSQEL…LLQRQESSVR (209 aa). K52 is covalently cross-linked (Glycyl lysine isopeptide (Lys-Gly) (interchain with G-Cter in ubiquitin)). A helical transmembrane segment spans residues 239-259; sequence LWKVLALVFGFATCATLFFIL. At 260–352 the chain is on the cytoplasmic side; it reads RKQYLQRQER…ITRVIPLYNS (93 aa). Glycyl lysine isopeptide (Lys-Gly) (interchain with G-Cter in ubiquitin) cross-links involve residues K273 and K299. The RING-type zinc-finger motif lies at 302-340; the sequence is CVVCLSSFKSCVFLECGHVCSCTECYRALPEPKKCPICR.

In terms of assembly, homooligomer. Interacts with MAP3K7/TAK1. Interacts with UBC9. Interacts with and sumoylates DNM1L. Interacts with MAVS. Interacts with TP53 (via N-terminus); the interaction leads to ubiquitination and proteasomal degradation of TP53. In terms of processing, ubiquitinated by PRKN during mitophagy, leading to its degradation and enhancement of mitophagy. Deubiquitinated by USP30.

The protein localises to the mitochondrion outer membrane. It localises to the peroxisome. It catalyses the reaction S-ubiquitinyl-[E2 ubiquitin-conjugating enzyme]-L-cysteine + [acceptor protein]-L-lysine = [E2 ubiquitin-conjugating enzyme]-L-cysteine + N(6)-ubiquitinyl-[acceptor protein]-L-lysine.. Its pathway is protein modification; protein ubiquitination. It participates in protein modification; protein sumoylation. Its function is as follows. Exhibits weak E3 ubiquitin-protein ligase activity. E3 ubiquitin ligases accept ubiquitin from an E2 ubiquitin-conjugating enzyme in the form of a thioester and then directly transfer the ubiquitin to targeted substrates. Can ubiquitinate AKT1 preferentially at 'Lys-284' involving 'Lys-48'-linked polyubiquitination and seems to be involved in regulation of Akt signaling by targeting phosphorylated Akt to proteasomal degradation. Mediates polyubiquitination of cytoplasmic TP53 at 'Lys-24' which targets TP53 for proteasomal degradation, thus reducing TP53 levels in the cytoplasm and mitochondrion. Proposed to preferentially act as a SUMO E3 ligase at physiological concentrations. Plays a role in the control of mitochondrial morphology by promoting mitochondrial fragmentation, and influences mitochondrial localization. Likely to promote mitochondrial fission through negatively regulating the mitochondrial fusion proteins MFN1 and MFN2, acting in a pathway that is parallel to the PRKN/PINK1 regulatory pathway. May also be involved in the sumoylation of the membrane fission protein DNM1L. Inhibits cell growth. When overexpressed, activates JNK through MAP3K7/TAK1 and induces caspase-dependent apoptosis. Involved in the modulation of innate immune defense against viruses by inhibiting RIGI-dependent antiviral response. Can mediate RIGI sumoylation and disrupt its polyubiquitination. The sequence is that of Mitochondrial ubiquitin ligase activator of NFKB 1 (MUL1) from Macaca fascicularis (Crab-eating macaque).